Here is a 399-residue protein sequence, read N- to C-terminus: uncharacterized protein (399 aa).

The next 5 helical transmembrane spans lie at 26–46, 266–286, 301–321, 324–344, and 358–378; these read LLTI…ISLG, VITI…AVGI, IGIL…FVVE, FLGL…AEVI, and AWIS…VGVI.

The protein belongs to the ABC-4 integral membrane protein family.

The protein resides in the cell membrane. This is an uncharacterized protein from Methanocaldococcus jannaschii (strain ATCC 43067 / DSM 2661 / JAL-1 / JCM 10045 / NBRC 100440) (Methanococcus jannaschii).